Consider the following 136-residue polypeptide: Large ribosomal subunit protein eL27B (136 aa).

Belongs to the eukaryotic ribosomal protein eL27 family. Component of the large ribosomal subunit (LSU). Mature yeast ribosomes consist of a small (40S) and a large (60S) subunit. The 40S small subunit contains 1 molecule of ribosomal RNA (18S rRNA) and at least 33 different proteins. The large 60S subunit contains 3 rRNA molecules (25S, 5.8S and 5S rRNA) and at least 46 different proteins.

The protein localises to the cytoplasm. Its function is as follows. Component of the ribosome, a large ribonucleoprotein complex responsible for the synthesis of proteins in the cell. The small ribosomal subunit (SSU) binds messenger RNAs (mRNAs) and translates the encoded message by selecting cognate aminoacyl-transfer RNA (tRNA) molecules. The large subunit (LSU) contains the ribosomal catalytic site termed the peptidyl transferase center (PTC), which catalyzes the formation of peptide bonds, thereby polymerizing the amino acids delivered by tRNAs into a polypeptide chain. The nascent polypeptides leave the ribosome through a tunnel in the LSU and interact with protein factors that function in enzymatic processing, targeting, and the membrane insertion of nascent chains at the exit of the ribosomal tunnel. In Schizosaccharomyces pombe (strain 972 / ATCC 24843) (Fission yeast), this protein is Large ribosomal subunit protein eL27B (rpl2702).